Consider the following 484-residue polypeptide: Poly(A) RNA polymerase GLD2 (484 aa).

Serine 62 and serine 69 each carry phosphoserine. The tract at residues 72 to 97 (FRGRKRLSDEKNLPLDGKRQRFHSPH) is disordered. The Nuclear localization signal signature appears at 76–92 (KRLSDEKNLPLDGKRQR). The segment covering 77–90 (RLSDEKNLPLDGKR) has biased composition (basic and acidic residues). Position 95 is a phosphoserine (serine 95). Mg(2+)-binding residues include aspartate 213 and aspartate 215. The 55-residue stretch at 386–440 (NLGDLLLGFLKYYATEFDWNSQMISVREAKAIPRPDGIEWRNKYICVEEPFDGTN) folds into the PAP-associated domain.

This sequence belongs to the DNA polymerase type-B-like family. GLD2 subfamily. As to quaternary structure, interacts with CPEB1, CPEB2, CPSF1 and PABPC1. Interacts with QKI isoform QKI7; promoting recruitment to miRNA miR-122 and miR-122 stabilization. Mg(2+) serves as cofactor. The cofactor is Mn(2+). Expressed in brain. Within brain, it is expressed in cerebellum, hippocampus and medulla.

It localises to the cytoplasm. It is found in the nucleus. It carries out the reaction RNA(n) + ATP = RNA(n)-3'-adenine ribonucleotide + diphosphate. Its function is as follows. Cytoplasmic poly(A) RNA polymerase that adds successive AMP monomers to the 3'-end of specific RNAs, forming a poly(A) tail. In contrast to the canonical nuclear poly(A) RNA polymerase, it only adds poly(A) to selected cytoplasmic mRNAs. Does not play a role in replication-dependent histone mRNA degradation. Adds a single nucleotide to the 3' end of specific miRNAs, monoadenylation stabilizes and prolongs the activity of some but not all miRNAs. The polypeptide is Poly(A) RNA polymerase GLD2 (Homo sapiens (Human)).